We begin with the raw amino-acid sequence, 273 residues long: Phosphate import ATP-binding protein PstB 1 (273 aa).

The 242-residue stretch at 27 to 268 folds into the ABC transporter domain; it reads ISIEHLSLYY…PLKKQTEDYI (242 aa). 59–66 is an ATP binding site; it reads GPSGCGKS.

Belongs to the ABC transporter superfamily. Phosphate importer (TC 3.A.1.7) family. In terms of assembly, the complex is composed of two ATP-binding proteins (PstB), two transmembrane proteins (PstC and PstA) and a solute-binding protein (PstS).

It is found in the cell inner membrane. It catalyses the reaction phosphate(out) + ATP + H2O = ADP + 2 phosphate(in) + H(+). In terms of biological role, part of the ABC transporter complex PstSACB involved in phosphate import. Responsible for energy coupling to the transport system. This Vibrio cholerae serotype O1 (strain ATCC 39315 / El Tor Inaba N16961) protein is Phosphate import ATP-binding protein PstB 1.